We begin with the raw amino-acid sequence, 1451 residues long: DNA polymerase III PolC-type (1451 aa).

In terms of domain architecture, Exonuclease spans 416–575; the sequence is FVIFDIETTG…YDTEALKKVF (160 aa).

The protein belongs to the DNA polymerase type-C family. PolC subfamily.

The protein resides in the cytoplasm. It carries out the reaction DNA(n) + a 2'-deoxyribonucleoside 5'-triphosphate = DNA(n+1) + diphosphate. In terms of biological role, required for replicative DNA synthesis. This DNA polymerase also exhibits 3' to 5' exonuclease activity. The polypeptide is DNA polymerase III PolC-type (Mycoplasma genitalium (strain ATCC 33530 / DSM 19775 / NCTC 10195 / G37) (Mycoplasmoides genitalium)).